The sequence spans 213 residues: mRNA-decapping protein D9 (213 aa).

In terms of domain architecture, Nudix hydrolase spans 30–209; that stretch reads KDTHVFAACI…EYLSYIYNML (180 aa). Positions 111–132 match the Nudix box motif; the sequence is GKLDKKESIKDCLRRELKEESD. Glutamate 117 contributes to the Mg(2+) binding site. The active-site Nucleophile is the glutamate 126. Mg(2+) contacts are provided by glutamate 130 and aspartate 151.

It belongs to the Nudix hydrolase family. It depends on Mg(2+) as a cofactor. Mn(2+) is required as a cofactor.

Its function is as follows. Decapping enzyme required for the removal of the 5'-end m7GpppN cap tethered to viral and host mRNAs to allow their decay in cells. May therefore accelerate viral and cellular mRNA turnover to eliminate competing host mRNAs and allow stage-specific synthesis of viral proteins. Acceleration of the turnover of cellular transcripts may even promote the shutoff of host protein synthesis. Does not cleave unmethylated RNAs or RNAs shorter than 24 nucleotides. This is mRNA-decapping protein D9 from Homo sapiens (Human).